A 185-amino-acid polypeptide reads, in one-letter code: Ribosome-recycling factor (185 aa).

It belongs to the RRF family.

The protein resides in the cytoplasm. Functionally, responsible for the release of ribosomes from messenger RNA at the termination of protein biosynthesis. May increase the efficiency of translation by recycling ribosomes from one round of translation to another. This is Ribosome-recycling factor from Ehrlichia ruminantium (strain Gardel).